The primary structure comprises 250 residues: 6-phosphogluconate dehydrogenase, decarboxylating (250 aa).

2 residues coordinate substrate: Lys-29 and Arg-56. Lys-77 carries the N6-acetyllysine modification. The substrate site is built by Arg-214 and His-220. 245-248 contributes to the NADP(+) binding site; it reads SSSY.

Belongs to the 6-phosphogluconate dehydrogenase family. Homodimer.

The protein localises to the cytoplasm. The catalysed reaction is 6-phospho-D-gluconate + NADP(+) = D-ribulose 5-phosphate + CO2 + NADPH. The protein operates within carbohydrate degradation; pentose phosphate pathway; D-ribulose 5-phosphate from D-glucose 6-phosphate (oxidative stage): step 3/3. In terms of biological role, catalyzes the oxidative decarboxylation of 6-phosphogluconate to ribulose 5-phosphate and CO(2), with concomitant reduction of NADP to NADPH. This is 6-phosphogluconate dehydrogenase, decarboxylating (PGD) from Sus scrofa (Pig).